The primary structure comprises 539 residues: Lipid scramblase CLPTM1L (539 aa).

At 1 to 10 the chain is on the cytoplasmic side; sequence MWSGRSSFTS. The chain crosses the membrane as a helical span at residues 11 to 31; the sequence is LVVGVFLVYVVHTCWVMYGIV. The Extracellular portion of the chain corresponds to 32 to 285; sequence YTRPCSGDSN…LKGIFVDTNL (254 aa). 2 N-linked (GlcNAc...) asparagine glycosylation sites follow: asparagine 91 and asparagine 101. The chain crosses the membrane as a helical span at residues 286–306; the sequence is YLLALTFFVAAFHLLFDFLAF. Topologically, residues 307-325 are cytoplasmic; that stretch reads KSDISFWKKKKSMIGMSTK. Residues 326–342 form a helical membrane-spanning segment; the sequence is AVLWRCFSTVVIFLFLL. Residues 343–403 are Extracellular-facing; that stretch reads DEQTSLLVLI…TEKYDAQAMK (61 aa). A helical transmembrane segment spans residues 404-424; the sequence is YLSYLLYPLCVGGAVYSLLNI. The Cytoplasmic segment spans residues 425-429; sequence KYKSW. Residues 430–450 form a helical membrane-spanning segment; the sequence is YSWLINSFVNGVYAFGFLFML. Residues 451-539 are Extracellular-facing; that stretch reads PQLFVNYKMK…EQPKRKPHPD (89 aa).

Belongs to the CLPTM1 family.

It is found in the endoplasmic reticulum membrane. It carries out the reaction a 6-(alpha-D-glucosaminyl)-1-(1,2-diacyl-sn-glycero-3-phospho)-1D-myo-inositol(in) = a 6-(alpha-D-glucosaminyl)-1-(1,2-diacyl-sn-glycero-3-phospho)-1D-myo-inositol(out). It catalyses the reaction 6-(alpha-D-glucosaminyl)-(1-octadecanoyl,2-(9Z)-octadecenoyl-sn-glycero-3-phospho)-1D-myo-inositol(in) = 6-(alpha-D-glucosaminyl)-(1-octadecanoyl,2-(9Z)-octadecenoyl-sn-glycero-3-phospho)-1D-myo-inositol(out). The enzyme catalyses a 1,2-diacyl-sn-glycero-3-phospho-(1D-myo-inositol)(in) = a 1,2-diacyl-sn-glycero-3-phospho-(1D-myo-inositol)(out). The catalysed reaction is a 1,2-diacyl-sn-glycero-3-phosphocholine(in) = a 1,2-diacyl-sn-glycero-3-phosphocholine(out). It carries out the reaction a 1,2-diacyl-sn-glycero-3-phosphoethanolamine(in) = a 1,2-diacyl-sn-glycero-3-phosphoethanolamine(out). Functionally, scramblase that mediates the translocation of glucosaminylphosphatidylinositol (alpha-D-GlcN-(1-6)-(1,2-diacyl-sn-glycero-3-phospho)-1D-myo-inositol, GlcN-PI) across the endoplasmic reticulum (ER) membrane, from the cytosolic leaflet to the luminal leaflet of the ER membrane, where it participates in the biosynthesis of glycosylphosphatidylinositol (GPI). GPI is a lipid glycoconjugate involved in post-translational modification of proteins. Can also translocate 1,2-diacyl-sn-glycero-3-phospho-(1D-myo-inositol) (phosphatidylinositol or PI), as well as several other phospholipids (1,2-diacyl-sn-glycero-3-phosphocholine, 1,2-diacyl-sn-glycero-3-phosphoethanolamine), and N-acetylglucosaminylphosphatidylinositol (GlcNAc-PI) in vitro. The polypeptide is Lipid scramblase CLPTM1L (Clptm1l) (Mus musculus (Mouse)).